The primary structure comprises 190 residues: Elongation factor P-like protein (190 aa).

Belongs to the elongation factor P family.

This is Elongation factor P-like protein from Escherichia fergusonii (strain ATCC 35469 / DSM 13698 / CCUG 18766 / IAM 14443 / JCM 21226 / LMG 7866 / NBRC 102419 / NCTC 12128 / CDC 0568-73).